A 930-amino-acid polypeptide reads, in one-letter code: Isoleucine--tRNA ligase (930 aa).

The short motif at 57 to 67 is the 'HIGH' region element; sequence PYANGNIHVGH. An L-isoleucyl-5'-AMP-binding site is contributed by glutamate 554. Residues 595–599 carry the 'KMSKS' region motif; sequence KMSKS. Position 598 (lysine 598) interacts with ATP. Positions 888, 891, 908, and 911 each coordinate Zn(2+).

Belongs to the class-I aminoacyl-tRNA synthetase family. IleS type 1 subfamily. Monomer. Requires Zn(2+) as cofactor.

The protein resides in the cytoplasm. It catalyses the reaction tRNA(Ile) + L-isoleucine + ATP = L-isoleucyl-tRNA(Ile) + AMP + diphosphate. Catalyzes the attachment of isoleucine to tRNA(Ile). As IleRS can inadvertently accommodate and process structurally similar amino acids such as valine, to avoid such errors it has two additional distinct tRNA(Ile)-dependent editing activities. One activity is designated as 'pretransfer' editing and involves the hydrolysis of activated Val-AMP. The other activity is designated 'posttransfer' editing and involves deacylation of mischarged Val-tRNA(Ile). This Streptococcus pneumoniae (strain Hungary19A-6) protein is Isoleucine--tRNA ligase.